Reading from the N-terminus, the 239-residue chain is Small ribosomal subunit protein uS2 (239 aa).

The protein belongs to the universal ribosomal protein uS2 family.

The polypeptide is Small ribosomal subunit protein uS2 (Francisella tularensis subsp. novicida (strain U112)).